A 100-amino-acid chain; its full sequence is Aspartyl/glutamyl-tRNA(Asn/Gln) amidotransferase subunit C (100 aa).

The protein belongs to the GatC family. In terms of assembly, heterotrimer of A, B and C subunits.

It carries out the reaction L-glutamyl-tRNA(Gln) + L-glutamine + ATP + H2O = L-glutaminyl-tRNA(Gln) + L-glutamate + ADP + phosphate + H(+). It catalyses the reaction L-aspartyl-tRNA(Asn) + L-glutamine + ATP + H2O = L-asparaginyl-tRNA(Asn) + L-glutamate + ADP + phosphate + 2 H(+). In terms of biological role, allows the formation of correctly charged Asn-tRNA(Asn) or Gln-tRNA(Gln) through the transamidation of misacylated Asp-tRNA(Asn) or Glu-tRNA(Gln) in organisms which lack either or both of asparaginyl-tRNA or glutaminyl-tRNA synthetases. The reaction takes place in the presence of glutamine and ATP through an activated phospho-Asp-tRNA(Asn) or phospho-Glu-tRNA(Gln). This is Aspartyl/glutamyl-tRNA(Asn/Gln) amidotransferase subunit C from Dictyoglomus thermophilum (strain ATCC 35947 / DSM 3960 / H-6-12).